The primary structure comprises 469 residues: Argininosuccinate lyase (469 aa).

The protein belongs to the lyase 1 family. Argininosuccinate lyase subfamily.

It is found in the cytoplasm. It carries out the reaction 2-(N(omega)-L-arginino)succinate = fumarate + L-arginine. It functions in the pathway amino-acid biosynthesis; L-arginine biosynthesis; L-arginine from L-ornithine and carbamoyl phosphate: step 3/3. The chain is Argininosuccinate lyase from Cupriavidus metallidurans (strain ATCC 43123 / DSM 2839 / NBRC 102507 / CH34) (Ralstonia metallidurans).